An 810-amino-acid polypeptide reads, in one-letter code: Glycerol-3-phosphate acyltransferase (810 aa).

The short motif at 305–310 is the HXXXXD motif element; it reads CHRSHI.

The protein belongs to the GPAT/DAPAT family.

It is found in the cell inner membrane. It catalyses the reaction sn-glycerol 3-phosphate + an acyl-CoA = a 1-acyl-sn-glycero-3-phosphate + CoA. It participates in phospholipid metabolism; CDP-diacylglycerol biosynthesis; CDP-diacylglycerol from sn-glycerol 3-phosphate: step 1/3. The protein is Glycerol-3-phosphate acyltransferase of Haemophilus influenzae (strain PittEE).